The following is a 290-amino-acid chain: Eukaryotic translation initiation factor 3 subunit G (290 aa).

Disordered regions lie at residues M1–K35 and E157–M200. The region spanning A210–R288 is the RRM domain.

It belongs to the eIF-3 subunit G family. In terms of assembly, component of the eukaryotic translation initiation factor 3 (eIF-3) complex.

It localises to the cytoplasm. RNA-binding component of the eukaryotic translation initiation factor 3 (eIF-3) complex, which is involved in protein synthesis of a specialized repertoire of mRNAs and, together with other initiation factors, stimulates binding of mRNA and methionyl-tRNAi to the 40S ribosome. The eIF-3 complex specifically targets and initiates translation of a subset of mRNAs involved in cell proliferation. This subunit can bind 18S rRNA. The sequence is that of Eukaryotic translation initiation factor 3 subunit G (tif35) from Aspergillus clavatus (strain ATCC 1007 / CBS 513.65 / DSM 816 / NCTC 3887 / NRRL 1 / QM 1276 / 107).